The sequence spans 554 residues: Protein SINE2 (554 aa).

An ARMADILLO-type fold region spans residues 17 to 290 (DKDPDSHKTA…MAAHETMRQA (274 aa)). Disordered regions lie at residues 306–332 (CKPR…VYSR), 411–442 (NESV…KHHR), and 465–487 (ETSS…TTED). The span at 311–321 (SLSGSVKSTSS) shows a compositional bias: low complexity. Residues 322-332 (LREHDGSVYSR) are compositionally biased toward basic and acidic residues. The span at 419 to 431 (NRSRSSRRNTKKR) shows a compositional bias: basic residues. Residues 465–485 (ETSSSSSIYDTSGTTTPTNTT) are compositionally biased toward low complexity. The 46-residue stretch at 509–554 (LDPRLGRSKGVLKLGLSVFSIAVAGFASFMWMYLQDDMMPPHLVPT) folds into the KASH domain. The helical transmembrane segment at 522 to 542 (LGLSVFSIAVAGFASFMWMYL) threads the bilayer. Positions 551–554 (LVPT) match the Required for nuclear localization motif.

As to quaternary structure, interacts with SUN1 and SUN2. Expressed in epidermal cells, mesophyll cells, trichomes and root cells.

It localises to the nucleus membrane. Functionally, plays a role in innate immunity against the oomycete pathogen A.arabidopsidis (Hpa). In Arabidopsis thaliana (Mouse-ear cress), this protein is Protein SINE2.